A 555-amino-acid chain; its full sequence is CTP synthase (555 aa).

An amidoligase domain region spans residues 1-267; that stretch reads MPKFVFVTGG…CKEVLEFLDL (267 aa). Ser-13 is a binding site for CTP. Ser-13 provides a ligand contact to UTP. Residues 14–19 and Asp-71 contribute to the ATP site; that span reads SIGKGI. 2 residues coordinate Mg(2+): Asp-71 and Glu-141. Residues 148 to 150, 188 to 193, and Lys-224 contribute to the CTP site; these read DIE and KTKPTQ. Residues 188 to 193 and Lys-224 each bind UTP; that span reads KTKPTQ. In terms of domain architecture, Glutamine amidotransferase type-1 spans 292-534; that stretch reads KVAVVGKYVQ…IAAAQSRLPR (243 aa). Gly-354 contacts L-glutamine. The active-site Nucleophile; for glutamine hydrolysis is Cys-381. L-glutamine is bound by residues 382–385, Glu-405, and Arg-462; that span reads LGMQ. Residues His-507 and Glu-509 contribute to the active site. The disordered stretch occupies residues 532–555; the sequence is LPRSPQEALKQTQINSPNQSKNNP. Polar residues predominate over residues 540 to 555; that stretch reads LKQTQINSPNQSKNNP.

The protein belongs to the CTP synthase family. As to quaternary structure, homotetramer.

The enzyme catalyses UTP + L-glutamine + ATP + H2O = CTP + L-glutamate + ADP + phosphate + 2 H(+). It catalyses the reaction L-glutamine + H2O = L-glutamate + NH4(+). It carries out the reaction UTP + NH4(+) + ATP = CTP + ADP + phosphate + 2 H(+). The protein operates within pyrimidine metabolism; CTP biosynthesis via de novo pathway; CTP from UDP: step 2/2. Allosterically activated by GTP, when glutamine is the substrate; GTP has no effect on the reaction when ammonia is the substrate. The allosteric effector GTP functions by stabilizing the protein conformation that binds the tetrahedral intermediate(s) formed during glutamine hydrolysis. Inhibited by the product CTP, via allosteric rather than competitive inhibition. In terms of biological role, catalyzes the ATP-dependent amination of UTP to CTP with either L-glutamine or ammonia as the source of nitrogen. Regulates intracellular CTP levels through interactions with the four ribonucleotide triphosphates. This Prochlorococcus marinus (strain MIT 9211) protein is CTP synthase.